The following is a 106-amino-acid chain: Tubulin-specific chaperone A (106 aa).

Ser94 carries the post-translational modification Phosphoserine.

The protein belongs to the TBCA family.

It localises to the cytoplasm. It is found in the cytoskeleton. Tubulin-folding protein; involved in the early step of the tubulin folding pathway. The sequence is that of Tubulin-specific chaperone A (RBL2) from Saccharomyces cerevisiae (strain ATCC 204508 / S288c) (Baker's yeast).